The primary structure comprises 164 residues: Ribosome-binding factor A (164 aa).

The interval 123 to 164 (ARDLGVPPSGEDDGDDEADDEDDDGGEEGPGAAAPPPADEGR) is disordered. Residues 132–149 (GEDDGDDEADDEDDDGGE) show a composition bias toward acidic residues. The span at 155-164 (AAPPPADEGR) shows a compositional bias: pro residues.

This sequence belongs to the RbfA family. In terms of assembly, monomer. Binds 30S ribosomal subunits, but not 50S ribosomal subunits or 70S ribosomes.

It localises to the cytoplasm. Its function is as follows. One of several proteins that assist in the late maturation steps of the functional core of the 30S ribosomal subunit. Associates with free 30S ribosomal subunits (but not with 30S subunits that are part of 70S ribosomes or polysomes). Required for efficient processing of 16S rRNA. May interact with the 5'-terminal helix region of 16S rRNA. This is Ribosome-binding factor A from Rhodospirillum rubrum (strain ATCC 11170 / ATH 1.1.1 / DSM 467 / LMG 4362 / NCIMB 8255 / S1).